The following is a 504-amino-acid chain: Sodium-coupled neutral amino acid symporter 2 (504 aa).

The segment at 1 to 22 is disordered; the sequence is MKKTEMGRFNISPDEDSSSYSS. Topologically, residues 1–76 are cytoplasmic; sequence MKKTEMGRFN…HPGTTSFGMS (76 aa). Positions 1 to 96 are regulates protein turnover upon amino acid deprivation; the sequence is MKKTEMGRFN…SGILGLSYAM (96 aa). Residues Ser-12, Ser-21, Ser-22, and Ser-55 each carry the phosphoserine modification. A helical membrane pass occupies residues 77–96; it reads VFNLSNAIVGSGILGLSYAM. Asn-82 provides a ligand contact to Na(+). The Extracellular segment spans residues 97–102; sequence ANTGIA. A helical transmembrane segment spans residues 103–123; that stretch reads LFIILLTFVSIFSLYSVHLLL. At 124–158 the chain is on the cytoplasmic side; sequence KTANEGGSLLYEQLGHKAYGLAGKLAASGSITMQN. Residues 159-177 form a helical membrane-spanning segment; that stretch reads IGAMSSYLFIVKYELPLVI. At 178–188 the chain is on the extracellular side; the sequence is KALMNIEDTNG. A helical membrane pass occupies residues 189 to 209; that stretch reads LWYLNGDYLVLLVSFVLILPL. Residues 210-217 lie on the Cytoplasmic side of the membrane; the sequence is SLLRNLGY. The chain crosses the membrane as a helical span at residues 218 to 238; sequence LGYTSGLSLLCMIFFLIVVIC. The Extracellular segment spans residues 239–290; it reads KKFQIPCPVEVALMANETVNGTFTQVALAALASNSTAADTCRPRYFIFNSQT. Cys-245 and Cys-279 form a disulfide bridge. 3 N-linked (GlcNAc...) asparagine glycosylation sites follow: Asn-254, Asn-258, and Asn-272. The chain crosses the membrane as a helical span at residues 291-311; that stretch reads VYAVPILTFSFVCHPAVLPIY. Over 312–327 the chain is Cytoplasmic; it reads EELKSRSRRRMMNVSK. The chain crosses the membrane as a helical span at residues 328–348; that stretch reads ISFFAMFLMYLLAALFGYLTF. The Extracellular segment spans residues 349–369; sequence YEHVESELLHTYSAIVGTDIL. The chain crosses the membrane as a helical span at residues 370–390; that stretch reads LLVVRLAVLVAVTLTVPVVIF. Thr-384 is a Na(+) binding site. Topologically, residues 391–411 are cytoplasmic; the sequence is PIRSSVTHLLCPTKEFSWFRH. The helical transmembrane segment at 412–432 threads the bilayer; sequence SVITVTILAFTNLLVIFVPTI. Residues 433–434 are Extracellular-facing; sequence RD. The helical transmembrane segment at 435-455 threads the bilayer; sequence IFGFIGASAAAMLIFILPSAF. The Cytoplasmic portion of the chain corresponds to 456-470; that stretch reads YIKLVKKEPMRSVQK. Residues 471–493 traverse the membrane as a helical segment; it reads IGALCFLLSGVVVMIGSMGLIVL. At 494–504 the chain is on the extracellular side; sequence DWVHDASAGGH.

The protein belongs to the amino acid/polyamine transporter 2 family. In terms of processing, polyubiquitination by NEDD4L regulates the degradation and the activity of SLC38A2. As to expression, widely expressed. Expressed in skeletal muscle and adipose tissue (at protein level). Expressed by glutamatergic and GABAergic neurons together with astrocytes and other non-neuronal cells in the cerebral cortex (at protein level). Widely expressed in the central nervous systeme where, it is enriched in the spinal cord and the brainstem nuclei, especially those of the auditory system.

It is found in the cell membrane. The enzyme catalyses L-alanine(in) + Na(+)(in) = L-alanine(out) + Na(+)(out). The catalysed reaction is glycine(in) + Na(+)(in) = glycine(out) + Na(+)(out). It carries out the reaction L-serine(in) + Na(+)(in) = L-serine(out) + Na(+)(out). It catalyses the reaction L-proline(in) + Na(+)(in) = L-proline(out) + Na(+)(out). The enzyme catalyses L-methionine(in) + Na(+)(in) = L-methionine(out) + Na(+)(out). The catalysed reaction is L-histidine(in) + Na(+)(in) = L-histidine(out) + Na(+)(out). It carries out the reaction L-asparagine(in) + Na(+)(in) = L-asparagine(out) + Na(+)(out). It catalyses the reaction L-glutamine(in) + Na(+)(in) = L-glutamine(out) + Na(+)(out). The enzyme catalyses L-threonine(in) + Na(+)(in) = L-threonine(out) + Na(+)(out). The catalysed reaction is L-leucine(in) + Na(+)(in) = L-leucine(out) + Na(+)(out). It carries out the reaction L-phenylalanine(in) + Na(+)(in) = L-phenylalanine(out) + Na(+)(out). With respect to regulation, inhibited by N-methyl-D-glucamine. Inhibited by choline. Allosteric regulation of sodium ions binding by pH. Functionally, symporter that cotransports neutral amino acids and sodium ions from the extracellular to the intracellular side of the cell membrane. The transport is pH-sensitive, Li(+)-intolerant, electrogenic, driven by the Na(+) electrochemical gradient and cotransports of neutral amino acids and sodium ions with a stoichiometry of 1:1. May function in the transport of amino acids at the blood-brain barrier. May function in the transport of amino acids in the supply of maternal nutrients to the fetus through the placenta. Maintains a key metabolic glutamine/glutamate balance underpinning retrograde signaling by dendritic release of the neurotransmitter glutamate. Transports L-proline in differentiating osteoblasts for the efficient synthesis of proline-enriched proteins and provides proline essential for osteoblast differentiation and bone formation during bone development. The polypeptide is Sodium-coupled neutral amino acid symporter 2 (Rattus norvegicus (Rat)).